Consider the following 217-residue polypeptide: Probable transaldolase (217 aa).

Residue lysine 83 is the Schiff-base intermediate with substrate of the active site.

It belongs to the transaldolase family. Type 3B subfamily.

It localises to the cytoplasm. The catalysed reaction is D-sedoheptulose 7-phosphate + D-glyceraldehyde 3-phosphate = D-erythrose 4-phosphate + beta-D-fructose 6-phosphate. The protein operates within carbohydrate degradation; pentose phosphate pathway; D-glyceraldehyde 3-phosphate and beta-D-fructose 6-phosphate from D-ribose 5-phosphate and D-xylulose 5-phosphate (non-oxidative stage): step 2/3. Transaldolase is important for the balance of metabolites in the pentose-phosphate pathway. The sequence is that of Probable transaldolase from Caulobacter vibrioides (strain NA1000 / CB15N) (Caulobacter crescentus).